Reading from the N-terminus, the 1351-residue chain is D-lysergyl-peptide-synthetase subunit 2 (1351 aa).

Residues 285-684 (RCLSQPTASA…GRKDTQVKLR (400 aa)) are adenylation (A) domain. The region spanning 828 to 904 (APQTTTEKLL…ALACVVRSGK (77 aa)) is the Carrier domain. Ser-865 is modified (O-(pantetheine 4'-phosphoryl)serine). The condensation (C) domain stretch occupies residues 941-1340 (EDVYPCTPLQ…LIRDILAVPQ (400 aa)).

This sequence belongs to the NRP synthetase family.

The protein operates within alkaloid biosynthesis; ergot alkaloid biosynthesis. D-lysergyl-peptide-synthetase subunit 2; part of the gene cluster that mediates the biosynthesis of fungal ergot alkaloid ergovaline, the predominant ergopeptine product in E.festucae var. lolii. DmaW catalyzes the first step of ergot alkaloid biosynthesis by condensing dimethylallyl diphosphate (DMAP) and tryptophan to form 4-dimethylallyl-L-tryptophan. The second step is catalyzed by the methyltransferase easF that methylates 4-dimethylallyl-L-tryptophan in the presence of S-adenosyl-L-methionine, resulting in the formation of 4-dimethylallyl-L-abrine. The catalase easC and the FAD-dependent oxidoreductase easE then transform 4-dimethylallyl-L-abrine to chanoclavine-I which is further oxidized by easD in the presence of NAD(+), resulting in the formation of chanoclavine-I aldehyde. Agroclavine dehydrogenase easG then mediates the conversion of chanoclavine-I aldehyde to agroclavine via a non-enzymatic adduct reaction: the substrate is an iminium intermediate that is formed spontaneously from chanoclavine-I aldehyde in the presence of glutathione. The presence of easA is not required to complete this reaction. Further conversion of agroclavine to paspalic acid is a two-step process involving oxidation of agroclavine to elymoclavine and of elymoclavine to paspalic acid, the second step being performed by the elymoclavine oxidase cloA. Paspalic acid is then further converted to D-lysergic acid. Ergovaline is assembled from D-lysergic acid and three different amino acids by the D-lysergyl-peptide-synthetase composed of a monomudular (lpsB) and a trimodular (lpsA) nonribosomal peptide synthetase subunit. The protein is D-lysergyl-peptide-synthetase subunit 2 of Epichloe festucae var. lolii (Neotyphodium lolii).